The sequence spans 523 residues: Calcium-dependent protein kinase 1 (523 aa).

Residues Met-1–Glu-36 form a disordered region. A lipid anchor (N-myristoyl glycine) is attached at Gly-2. Cys-3 carries S-palmitoyl cysteine lipidation. Positions Tyr-57–Ile-324 constitute a Protein kinase domain. ATP is bound by residues Leu-63–Val-71, Lys-86, and Lys-90. At Ser-65 the chain carries Phosphoserine. Phosphoserine is present on Ser-117. Asp-190 (proton acceptor) is an active-site residue. Phosphoserine is present on residues Ser-216 and Ser-219. At Thr-230 the chain carries Phosphothreonine. A Phosphoserine modification is found at Ser-334. The short motif at Asn-345 to Ser-352 is the J domain autoinhibitory motif element. Positions Asn-345–Ile-363 are j domain. The J domain interacts with the EF-hand domains motif lies at Gln-353–Ile-363. 4 consecutive EF-hand domains span residues Glu-371 to Phe-406, Asn-415 to Leu-450, Phe-451 to Ser-486, and Glu-487 to His-520. Residues Asp-384, Asn-386, Asp-388, Gln-390, Glu-395, Asp-428, Asp-430, Asn-432, Tyr-434, Glu-439, Asp-464, Asp-466, Ser-468, Lys-470, Glu-475, Asp-498, Asn-500, Asp-502, Met-504, and Glu-509 each contribute to the Ca(2+) site.

This sequence belongs to the protein kinase superfamily. Ser/Thr protein kinase family. CDPK subfamily. As to quaternary structure, monomer. Mg(2+) is required as a cofactor. Post-translationally, myristoylated. Myristoylation and palmitoylation are required for the localization to the parasitophorous vacuole membrane. In terms of processing, palmitoylated. Palmitoylation increases in merozoites in response to low level of extracellular K(+) in the host blood. Myristoylation and palmitoylation are required for the localization to the parasitophorous vacuole membrane. Phosphorylation at Thr-230 may regulate CDPK1 kinase activity. Phosphorylation increases in response to an increase in intracellular Ca(2+) levels. Autophosphorylated in vitro. Autophosphorylation does not affect membrane localization in vitro.

The protein resides in the membrane. It localises to the cell membrane. The protein localises to the parasitophorous vacuole membrane. It is found in the cytoplasm. Its subcellular location is the cell projection. The protein resides in the cilium. It localises to the flagellum. The protein localises to the host cell membrane. It carries out the reaction L-seryl-[protein] + ATP = O-phospho-L-seryl-[protein] + ADP + H(+). The enzyme catalyses L-threonyl-[protein] + ATP = O-phospho-L-threonyl-[protein] + ADP + H(+). With respect to regulation, activated by calcium. Upon calcium binding to the EF-hand domains, the C-terminus of the junction domain (J domain) undergoes a conformational change which results in the dissociation of the pseudo-substrate inhibitory motif from the catalytic domain. This, in turn may facilitate the autophosphorylation of the activation loop at Thr-230, which leads to the kinase activation. In terms of biological role, calcium-dependent protein kinase which acts as a sensor and effector of intracellular Ca(2+) levels probably in part downstream of cGMP-activated PKG kinase. During the liver stage, involved in sporozoite motility and thus in sporozoite invasion of host hepatocytes, probably together with CDPK4 and CDPK5. In the mosquito midgut and during the last stage of male gamete exflagellation, may play a role in the rupture of the host erythrocyte membrane. In the mosquito midgut, required for the differentiation of the zygote into the ookinete by promoting the translational activation of a subset of repressed mRNAs; these mRNAs are kept repressed in the zygote by the DOZI- or CITH-containing mRNP complexes. Dispensable during the asexual blood stage. The sequence is that of Calcium-dependent protein kinase 1 from Plasmodium berghei (strain Anka).